The following is a 144-amino-acid chain: Large ribosomal subunit protein uL15 (144 aa).

The segment at 1-54 (MRLNTLSPAEGSKKAGKRLGRGIGSGLGKTGGRGHKGQKSRSGGGVRRGFEGGQ) is disordered. The segment covering 21-31 (RGIGSGLGKTG) has biased composition (gly residues).

The protein belongs to the universal ribosomal protein uL15 family. In terms of assembly, part of the 50S ribosomal subunit.

Its function is as follows. Binds to the 23S rRNA. The protein is Large ribosomal subunit protein uL15 of Escherichia coli (strain K12 / MC4100 / BW2952).